Consider the following 269-residue polypeptide: Tryptophan synthase alpha chain (269 aa).

Active-site proton acceptor residues include glutamate 49 and aspartate 60.

It belongs to the TrpA family. In terms of assembly, tetramer of two alpha and two beta chains.

The enzyme catalyses (1S,2R)-1-C-(indol-3-yl)glycerol 3-phosphate + L-serine = D-glyceraldehyde 3-phosphate + L-tryptophan + H2O. The protein operates within amino-acid biosynthesis; L-tryptophan biosynthesis; L-tryptophan from chorismate: step 5/5. In terms of biological role, the alpha subunit is responsible for the aldol cleavage of indoleglycerol phosphate to indole and glyceraldehyde 3-phosphate. The sequence is that of Tryptophan synthase alpha chain from Stutzerimonas stutzeri (strain A1501) (Pseudomonas stutzeri).